A 405-amino-acid polypeptide reads, in one-letter code: Lariat debranching enzyme (405 aa).

A divalent metal cation contacts are provided by cysteine 11, histidine 13, aspartate 40, and asparagine 85. Residues 125–159 form a lariat recognition loop region; sequence SGIWKEWDFNKQRPDWNDLENNNWKANIRNLYHVR. 3 residues coordinate a divalent metal cation: histidine 179, histidine 231, and histidine 233. The disordered stretch occupies residues 242 to 277; it reads HNKRSHEPPNKSTSKTKKNNNEIDLDLSSDEDERSG. A compositionally biased stretch (acidic residues) spans 264-274; sequence IDLDLSSDEDE. Residue serine 269 is modified to Phosphoserine.

It belongs to the lariat debranching enzyme family. Fe(2+) serves as cofactor. Requires Zn(2+) as cofactor. It depends on Mn(2+) as a cofactor.

Its subcellular location is the nucleus. The protein localises to the cytoplasm. Its activity is regulated as follows. Active in presence of diverse metals including Fe(2+), Zn(2+) and Mn(2+). Binds two metal cations in two adjacent alpha and beta metal-binding pockets. The activity is the highest with Fe(2+) bound to the 2 metal-binding sites. Activity is low with Zn(2+) and Mn(2+). In terms of biological role, cleaves the 2'-5' phosphodiester linkage at the branch point of lariat intron pre-mRNAs after splicing and converts them into linear molecules that are subsequently degraded, thereby facilitating ribonucleotide turnover. It also participates in Ty1 retrovirus-like transposition via an RNA lariat intermediate in cDNA synthesis. The protein is Lariat debranching enzyme (DBR1) of Saccharomyces cerevisiae (strain ATCC 204508 / S288c) (Baker's yeast).